Reading from the N-terminus, the 287-residue chain is Pantothenate synthetase (287 aa).

30–37 (MGNLHSGH) serves as a coordination point for ATP. Catalysis depends on H37, which acts as the Proton donor. (R)-pantoate is bound at residue Q61. A beta-alanine-binding site is contributed by Q61. Position 149-152 (149-152 (GEKD)) interacts with ATP. Residue Q155 participates in (R)-pantoate binding. Residues V178 and 186–189 (LSSR) each bind ATP.

Belongs to the pantothenate synthetase family. Homodimer.

It is found in the cytoplasm. It catalyses the reaction (R)-pantoate + beta-alanine + ATP = (R)-pantothenate + AMP + diphosphate + H(+). The protein operates within cofactor biosynthesis; (R)-pantothenate biosynthesis; (R)-pantothenate from (R)-pantoate and beta-alanine: step 1/1. In terms of biological role, catalyzes the condensation of pantoate with beta-alanine in an ATP-dependent reaction via a pantoyl-adenylate intermediate. The protein is Pantothenate synthetase of Pseudomonas putida (strain GB-1).